The following is a 692-amino-acid chain: MSEQSICQARASVMIYDDTSKKWVPIKPGQQGFSRINIYHNTANNTFRVVGVKLQDQQVVINYSLVKGLKYNQATPTFHQWRDARQVYGLNFASKEEATTFSNAMLFALNIMNSQDGGPAAQRQAQNIQNGPSPDDMEIQRRQMLEQQQRQETLERRTSTTVSTLQINVSSSPSHCQSPPPDYSNFSASPSTGAVPPPSYAKVISSAAASPELSSKSTNKSSNRTSEPPELQNSHCGSEPSTSQSSAFSPIRPSNGTVSRSIKQISLSPPPAPGSHSPLSLHQSVRHPSLSFSPCSSSPPVSVTSSVQKNISPQSPIPVVLPVIPVQNSRIRGCSDKMVQNPIVPQTGPSDQAEEPLTSQISLSSPRTQVKCVDRSFLSYIETVPVAQLPMITSPFGILTQASPQPFQSSTHPSQQSYQSMSHFVSLPPPYAAVSELTLPKRTTPYMTSSTITQFSPVLPPGHPSSAAMVASVGSAPAPASGPPPPPPPGPPPPSGGTPPPAPPLPAGGSQGVVYEESPASGLAAALAGAKLRKVQRPEDGSSSPCGATKTDANRTSSGGGGGGLMEEMNKLLAKRRKAASYTDKPGDKKEEECQNEDASLSSSPVTRGPTPQNSSDLGKKPWERSNSVEKPVPSLLSRMKPVSSSNDVSTDALDFDRMKQEILEEVVRELHKVKEEIIDAIRQELSRISTT.

Residues 1–112 (MSEQSICQAR…NAMLFALNIM (112 aa)) form the WH1 domain. 3 disordered regions span residues 116–310 (DGGP…VQKN), 466–518 (SAAM…YEES), and 531–650 (KLRK…NDVS). 2 stretches are compositionally biased toward polar residues: residues 123 to 132 (RQAQNIQNGP) and 159 to 169 (STTVSTLQINV). Over residues 214–226 (SSKSTNKSSNRTS) the composition is skewed to low complexity. Residues 231 to 267 (LQNSHCGSEPSTSQSSAFSPIRPSNGTVSRSIKQISL) are compositionally biased toward polar residues. 2 stretches are compositionally biased toward low complexity: residues 288-310 (PSLS…VQKN) and 466-479 (SAAM…APAP). The span at 480 to 506 (ASGPPPPPPPGPPPPSGGTPPPAPPLP) shows a compositional bias: pro residues. Residues 522-542 (GLAAALAGAKLRKVQRPEDGS) form an EVH2 block A region. The interval 522–689 (GLAAALAGAK…DAIRQELSRI (168 aa)) is EVH2. A KLKR motif is present at residues 531–534 (KLRK). Positions 563-580 (GGLMEEMNKLLAKRRKAA) are EVH2 block B. Positions 597-617 (EDASLSSSPVTRGPTPQNSSD) are enriched in polar residues. Residues 618-628 (LGKKPWERSNS) are compositionally biased toward basic and acidic residues. An EVH2 block C region spans residues 655 to 689 (DFDRMKQEILEEVVRELHKVKEEIIDAIRQELSRI).

This sequence belongs to the Ena/VASP family. During embryonic and tadpole development, expressed in the cement gland, brain, neural tube, myotome and neural placodes, including the otic, lateral line and olfactory placodes. All isoforms show similar spatial expression patterns.

It is found in the cytoplasm. The protein resides in the cytoskeleton. Its subcellular location is the stress fiber. The protein localises to the cell projection. It localises to the lamellipodium. Ena/VASP proteins are actin-associated proteins involved in a range of processes dependent on cytoskeleton remodeling and cell polarity such as axon guidance and lamellipodial and filopodial dynamics in migrating cells. Evl enhances actin nucleation and polymerization. This is Ena/VASP-like protein from Xenopus laevis (African clawed frog).